A 2238-amino-acid polypeptide reads, in one-letter code: Protein Ycf2 (2238 aa).

1579–1586 (GSIGTGRS) lines the ATP pocket.

This sequence belongs to the Ycf2 family.

The protein localises to the plastid. Probable ATPase of unknown function. Its presence in a non-photosynthetic plant (Epifagus virginiana) and experiments in tobacco indicate that it has an essential function which is probably not related to photosynthesis. This is Protein Ycf2 from Cuscuta exaltata (Tall dodder).